Reading from the N-terminus, the 303-residue chain is ATP-dependent (S)-NAD(P)H-hydrate dehydratase (303 aa).

The region spanning 12-299 is the YjeF C-terminal domain; that stretch reads QQQLVCSVIP…AEVRTAFSML (288 aa). (6S)-NADPHX is bound by residues G106 and 158–164; that span reads NAVELDR. ATP is bound by residues 194–198 and 213–222; these read KGSED and GSPRRCGGQG. A (6S)-NADPHX-binding site is contributed by D223.

Belongs to the NnrD/CARKD family. The cofactor is Mg(2+).

The catalysed reaction is (6S)-NADHX + ATP = ADP + phosphate + NADH + H(+). It carries out the reaction (6S)-NADPHX + ATP = ADP + phosphate + NADPH + H(+). In terms of biological role, catalyzes the dehydration of the S-form of NAD(P)HX at the expense of ATP, which is converted to ADP. Together with NAD(P)HX epimerase, which catalyzes the epimerization of the S- and R-forms, the enzyme allows the repair of both epimers of NAD(P)HX, a damaged form of NAD(P)H that is a result of enzymatic or heat-dependent hydration. The polypeptide is ATP-dependent (S)-NAD(P)H-hydrate dehydratase (Ixodes scapularis (Black-legged tick)).